The primary structure comprises 1623 residues: Histone-lysine N-methyltransferase set-9 (1623 aa).

Disordered regions lie at residues 1–102, 112–131, 198–227, 448–600, and 645–781; these read MADG…APQQ, AADA…RPTE, EDAV…SVAS, QRPG…VLRP, and TGQS…DEAA. The span at 62 to 71 shows a compositional bias: basic and acidic residues; the sequence is HQMENQEFYH. Low complexity predominate over residues 77–100; that stretch reads EPQQIPQIPVFQPAAYNPPNYVAP. Residues 206–227 show a composition bias toward polar residues; the sequence is PGTQYRRNQQAGGGLPSTSVAS. A compositionally biased stretch (basic and acidic residues) spans 554-573; that stretch reads MTQEEKNAHFARLTTDKEKP. Pro residues predominate over residues 587-597; the sequence is PHVPPPPPPLV. The segment covering 645-669 has biased composition (polar residues); sequence TGQSGSSAAARQRTVSGSAARAQTY. The span at 723 to 733 shows a compositional bias: basic residues; sequence HRPRGRPKGTR. The segment covering 772 to 781 has biased composition (acidic residues); that stretch reads SESEGIDEAA. The PHD-type zinc-finger motif lies at 786-834; that stretch reads TMRCHCGMDHGDGDTIECEGCKTWQHMACMGLTLKSNTSKYKCEMCLPR. Residues 857 to 895 are disordered; sequence AARKQKRKSEPVEQKQKSSQPSTSRKSAPMALQQPAEPR. A compositionally biased stretch (polar residues) spans 873 to 882; that stretch reads KSSQPSTSRK. One can recognise an SET domain in the interval 965-1056; the sequence is MSSEVKRQPG…RNTEVTLPFD (92 aa). 2 stretches are compositionally biased toward basic and acidic residues: residues 1089 to 1157 and 1172 to 1194; these read AERH…KKME and AREE…EGKR. Disordered stretches follow at residues 1089-1318 and 1356-1623; these read AERH…NVAP and LLAG…TRWN. A coiled-coil region spans residues 1093–1201; the sequence is RAMDHKKQEA…GKRKEARRRS (109 aa). The segment covering 1242 to 1252 has biased composition (polar residues); it reads TTQPSTSSFAT. A compositionally biased stretch (low complexity) spans 1282 to 1293; it reads ATTVATPKATTA. Positions 1364–1401 form a coiled coil; the sequence is FSEVRAQIEEENRMKERSRKREAKKKAVEKEKKEHRKE. Basic and acidic residues-rich tracts occupy residues 1365 to 1378, 1388 to 1406, 1413 to 1429, and 1447 to 1464; these read SEVR…NRMK, KKAV…KKTN, KSEK…EKKP, and KKTE…ESSS. The span at 1533–1544 shows a compositional bias: polar residues; the sequence is SSSNTAPTTTIA.

This sequence belongs to the class V-like SAM-binding methyltransferase superfamily. As to expression, predominantly expressed in the germline (at protein level).

It is found in the nucleus. It carries out the reaction L-lysyl-[histone] + S-adenosyl-L-methionine = N(6)-methyl-L-lysyl-[histone] + S-adenosyl-L-homocysteine + H(+). Functionally, histone methyltransferase. Might play a role in transcriptional regulation. Together with set-26, negatively regulates lifespan in a germline-independent, partially daf-16-dependent fashion. Together with set-26, plays a role in germline development and maintenance and might play a role in the restriction of the trimethylation mark on histone H3 'Lys-4'(H3K4me3) to target genes specifically in the germline. The polypeptide is Histone-lysine N-methyltransferase set-9 (Caenorhabditis elegans).